The sequence spans 128 residues: Large ribosomal subunit protein bL21 (128 aa).

The segment at Gly-104–Glu-128 is disordered. The segment covering Glu-119–Glu-128 has biased composition (low complexity).

The protein belongs to the bacterial ribosomal protein bL21 family. Part of the 50S ribosomal subunit. Contacts protein L20.

Functionally, this protein binds to 23S rRNA in the presence of protein L20. This chain is Large ribosomal subunit protein bL21, found in Rhodopseudomonas palustris (strain BisB5).